A 635-amino-acid polypeptide reads, in one-letter code: tRNA 5-methylaminomethyl-2-thiouridine biosynthesis bifunctional protein MnmC (635 aa).

Residues 1–227 are tRNA (mnm(5)s(2)U34)-methyltransferase; the sequence is MSEPIDWLPD…KRSNLQAEFD (227 aa). The FAD-dependent cmnm(5)s(2)U34 oxidoreductase stretch occupies residues 254-635; sequence IGGGLSGAAV…ALSTERLPAD (382 aa).

The protein in the N-terminal section; belongs to the methyltransferase superfamily. tRNA (mnm(5)s(2)U34)-methyltransferase family. It in the C-terminal section; belongs to the DAO family. It depends on FAD as a cofactor.

Its subcellular location is the cytoplasm. The enzyme catalyses 5-aminomethyl-2-thiouridine(34) in tRNA + S-adenosyl-L-methionine = 5-methylaminomethyl-2-thiouridine(34) in tRNA + S-adenosyl-L-homocysteine + H(+). Catalyzes the last two steps in the biosynthesis of 5-methylaminomethyl-2-thiouridine (mnm(5)s(2)U) at the wobble position (U34) in tRNA. Catalyzes the FAD-dependent demodification of cmnm(5)s(2)U34 to nm(5)s(2)U34, followed by the transfer of a methyl group from S-adenosyl-L-methionine to nm(5)s(2)U34, to form mnm(5)s(2)U34. The protein is tRNA 5-methylaminomethyl-2-thiouridine biosynthesis bifunctional protein MnmC of Paracidovorax citrulli (strain AAC00-1) (Acidovorax citrulli).